Here is a 1402-residue protein sequence, read N- to C-terminus: MSNSMRDLIDGEAELDDEEDDESFDEEAGDRPRRRPNIDDSSEEEEDDEDEEEARKIREGFIVDEDEEDEAEDSDARERRRRKKRRREREEEEQLDEEDLDLIGEAIPEWERKPQPQRLKRGHRDDHRPTERRGLAEIFSDEDEEHDDRGYGRPSGRAQADEFDDFIEDDYPEDDEERRHREEDEEVARPKDRGLNIDTTGLDKDALEDMDAIFGNGEDYEWALQLEEEQEHAERTKEDIELQDVFEPSQLKEKLLTDEDNRIRFNDEPERFQLDRKAFKNLQMTSDQFKEEARWISNLMLPSKNLSSELHGPFNKAVGKVLEFFVIDGVEVPYVFQHRRDYLIHAKKMRNPNRRDDPDAPEYTVDAEKLLTQDDLWKVLDLDIRFRSFLEKRNALEQTYDKLKEKTRDDILEEMIRQAQSIEELQDLQDYLNFQYSAELKDLAANDNSAQREIKRAGGRTAQFERIRRSNAYKFVQALGITPDRLAKNILRESSKVTSEDDSRLPDDLADTLVDADFPTGELVINAARQMLAEEMFASPRMRKHFRKNFYGMGIVSCRRTDKGLRKIDEANPYYEVKYLKNMSIADLAVRPELFLKMMKAEEEGLIEIKVSLENDREFRQQLFSDFASENFSELADKWNAERQKVIDLAFDKLVKVIVKGVKDSLRTACQDELLKTCRELYFKRLDQAPYKPKGMVIGTTPRVLTLSNGMGDPNREPVSWVSMDEDGRILEHGTFTNLARDESQREALAELVRRRQPDVIGISGFSADTHRLIKDVEGLVSEKGLVGPEYDDPETNEYRSDLLEVIVINDEVARLYKDSPRAVADHPSLNPMTRYCIALARYMQNPMKEYAALGKDVTSLQIHPYQQYLPQAKLLKHLETAMVDMVNLVGVDINVAMQDANTAHLLPYVAGLGPRKAQLLIKGINKNGGVVTSRDELVGDPERHKLPVLGPRVWNNCASFLFIEYEPTNPESDPLDNTRIHPEDYDLARKVAADALGLDEEDVKAETDENGAGAIVRKLFKDDEQDKVNELILEEYAEQLEREYQQRKRATLETIRAELQVPYEELRKKFESLTVDQVFTMLTGENRDSLCEGMIVAANVRVVKDDFAIVKLDCGIEGRIESHDVSYRHSIKDVLHVGQVVQAKLIDLNRKEFVSKLSMRDEEMRRPFRRHFDHGRDQWDYRKEDEDREELREKDKSTGRAQRVVNHPLFKPFNSTQAEEYLGSQPSGEVVIRPSSKGNDHLAVTWKVADGVFQHVDVLELQKENEFAVGRVLRVGKYTYQDLDELIVDHVKAMAKKVDELMQCDKFQKGSRNETEKWLTTYMDANPNRSTYAFCIDTKHPGYFFLCFKASRNSRVNAWPVRVIPHAFELMKSQYPDVRALCNGFKLRYQSEMLKQQSGGR.

The interval 1 to 199 (MSNSMRDLID…PKDRGLNIDT (199 aa)) is disordered. 4 stretches are compositionally biased toward acidic residues: residues 10–28 (DGEAELDDEEDDESFDEEA), 40–52 (DSSEEEEDDEDEE), 62–75 (IVDEDEEDEAEDSD), and 90–102 (EEEEQLDEEDLDL). Over residues 123–135 (HRDDHRPTERRGL) the composition is skewed to basic and acidic residues. The segment covering 161–176 (DEFDDFIEDDYPEDDE) has biased composition (acidic residues). Residues 177–199 (ERRHREEDEEVARPKDRGLNIDT) show a composition bias toward basic and acidic residues. An S1 motif domain is found at 1094–1161 (GMIVAANVRV…KEFVSKLSMR (68 aa)). Residues 1209-1306 (PLFKPFNSTQ…KKVDELMQCD (98 aa)) enclose the SH2 domain.

This sequence belongs to the SPT6 family.

It is found in the nucleus. It localises to the chromosome. In terms of biological role, histone H3-H4 chaperone that plays a role in maintenance of chromatin structure during RNA polymerase II transcription elongation thereby repressing transcription initiation from cryptic promoters. Mediates the reassembly of nucleosomes onto the promoters of at least a selected set of genes during repression; the nucleosome reassembly is essential for transcriptional repression. Essential for viability. The polypeptide is Transcription elongation factor spt-6 (spt-6) (Neurospora crassa (strain ATCC 24698 / 74-OR23-1A / CBS 708.71 / DSM 1257 / FGSC 987)).